A 302-amino-acid polypeptide reads, in one-letter code: Bacteriochlorophyll synthase 33 kDa chain (302 aa).

A run of 9 helical transmembrane segments spans residues 25–45 (ITWFPPIWAYLCGTVSVGIWP), 49–69 (WPLVLLGMVLAGPLVCGMSQA), 97–117 (WGLYIALLMTVLSLAVGWMLG), 119–139 (WGFGATVFGVLAAWAYSVEPI), 145–165 (GWWGPGLVALCYEGLPWFTGA), 166–186 (AVLSAGAPSFFIVTVALLYAF), 223–243 (LACTVMAMAQILVITLLVIWG), 246–266 (IHAGIITALLVAQLFAMRVLL), and 275–295 (WYNGTGVTLYVLGMMVAAFAI).

The protein localises to the cell membrane. It participates in porphyrin-containing compound metabolism; bacteriochlorophyll biosynthesis (light-independent). Catalyzes the esterification of bacteriochlorophyllide a by geranylgeraniol-PPi. This is Bacteriochlorophyll synthase 33 kDa chain (bchG) from Cereibacter sphaeroides (strain ATCC 17023 / DSM 158 / JCM 6121 / CCUG 31486 / LMG 2827 / NBRC 12203 / NCIMB 8253 / ATH 2.4.1.) (Rhodobacter sphaeroides).